Here is a 467-residue protein sequence, read N- to C-terminus: Sialic acid-binding Ig-like lectin 12 (467 aa).

A signal peptide spans 1–18; it reads MLLLLLLLLLWGIKGVEG. Residues 19–353 lie on the Extracellular side of the membrane; it reads QNPQEVFTLN…ATLSEMMMGT (335 aa). One can recognise an Ig-like V-type domain in the interval 21–141; it reads PQEVFTLNVE…TKYNYMWDKM (121 aa). Intrachain disulfides connect C40–C176, C45–C108, and C170–C219. Residue N46 is glycosylated (N-linked (GlcNAc...) asparagine). Residue R126 participates in N-acetylneuraminate binding. Ig-like C2-type domains lie at 152–239 and 242–339; these read PQIL…LNVS and PKNL…LSLS. N167, N197, N216, N227, N237, N244, N262, N287, and N294 each carry an N-linked (GlcNAc...) asparagine glycan. An intrachain disulfide couples C278 to C323. The chain crosses the membrane as a helical span at residues 354-374; sequence FVGSGVTALLFLSVCILLLAV. Residues 375 to 467 are Cytoplasmic-facing; the sequence is RSYRRKPARP…IKFPQRTAWP (93 aa). The ITIM motif motif lies at 430-435; the sequence is IHYATL. Phosphotyrosine occurs at positions 432 and 455. Positions 453–458 match the SLAM-like motif motif; it reads TEYSEI.

Belongs to the immunoglobulin superfamily. SIGLEC (sialic acid binding Ig-like lectin) family. Homodimer; disulfide-linked. Interacts with PTPN6/SHP-1 and PTPN11/SHP-2 upon phosphorylation. Post-translationally, phosphorylation of Tyr-432 is required for binding to PTPN6 and PTPN11. Phosphorylation of Tyr-455 is involved in binding to PTPN6. Tyr-432 needs to be phosphorylated prior to Tyr-455. As to expression, expressed by monocytic/myeloid lineage cells. Found at higher levels in spleen, liver and heart. Found at lower levels in kidney and lung.

It localises to the membrane. Putative adhesion molecule that mediates sialic-acid dependent binding to cells. The sialic acid recognition site may be masked by cis interactions with sialic acids on the same cell surface. In the immune response, may act as an inhibitory receptor upon ligand induced tyrosine phosphorylation by recruiting cytoplasmic phosphatase(s) via their SH2 domain(s) that block signal transduction through dephosphorylation of signaling molecules. The polypeptide is Sialic acid-binding Ig-like lectin 12 (Siglec12) (Mus musculus (Mouse)).